A 157-amino-acid chain; its full sequence is MFDVLMYLFESYIHNETEMRVDQDTLTDDLTRAGFHRNDIYSALSWLEKLADIQEGQTAPLYLASDPLAMRIYTQDEELRLDAECRGFLLFLEQMQVLNLETREMIIERVMALETQEFDLEDLKWVILMVLFNVPGCENAYQQMEELLFEVNDGYVQ.

The protein belongs to the Smg family.

This is Protein Smg from Pectobacterium atrosepticum (strain SCRI 1043 / ATCC BAA-672) (Erwinia carotovora subsp. atroseptica).